Here is a 423-residue protein sequence, read N- to C-terminus: Keratin, type I cytoskeletal 18 (423 aa).

The residue at position 2 (Ser-2) is an N-acetylserine. A head region spans residues 2 to 71 (SFTTRSTTFS…GLAGMGGVQT (70 aa)). Phosphoserine occurs at positions 7, 11, 16, and 19. Residues Ser-31 and Ser-32 each carry the phosphoserine; alternate modification. O-linked (GlcNAc) serine; alternate glycans are attached at residues Ser-31 and Ser-32. Position 35 is a phosphoserine (Ser-35). Tyr-37 bears the Phosphotyrosine mark. At Ser-43 the chain carries Phosphoserine. An Omega-N-methylarginine modification is found at Arg-46. The residue at position 50 (Ser-50) is a Phosphoserine; alternate. Ser-50 carries an O-linked (GlcNAc) serine; alternate glycan. The residue at position 52 (Ser-52) is a Phosphoserine; by MAPKAPK2 and MAPKAPK3. Residues Ser-57 and Ser-60 each carry the phosphoserine modification. Residues 62–366 (GLAGMGGVQT…EALLNIKVKL (305 aa)) form a necessary for interaction with PNN region. Residues 69–121 (VQTEKETMQDLNDRLASYLDKVKNLETENRRLESKIREYLEKRGPQGVRDWGH) are interaction with TRADD. Residues 72 to 107 (EKETMQDLNDRLASYLDKVKNLETENRRLESKIREY) form a coil 1A region. The IF rod domain occupies 72-384 (EKETMQDLND…RLLEDGDDFS (313 aa)). Lys-73 participates in a covalent cross-link: Glycyl lysine isopeptide (Lys-Gly) (interchain with G-Cter in SUMO2). Ser-85 bears the Phosphoserine mark. Positions 108-125 (LEKRGPQGVRDWGHYFKT) are linker 1. An N6-acetyllysine modification is found at Lys-124. The interval 126–217 (IEDLRAQIFA…KNHEEEVQGL (92 aa)) is coil 1B. Phosphoserine occurs at positions 137 and 170. The tract at residues 218-241 (EAQIASSGLTVEVDAPKSQDLSKI) is linker 12. Residues 236 to 384 (QDLSKIMADI…RLLEDGDDFS (149 aa)) form an interaction with DNAJB6 region. A Glycyl lysine isopeptide (Lys-Gly) (interchain with G-Cter in SUMO2) cross-link involves residue Lys-240. Residues 242 to 380 (MADIRAQYEQ…ATYRRLLEDG (139 aa)) form a coil 2 region. Thr-295 carries the post-translational modification Phosphothreonine. Glycyl lysine isopeptide (Lys-Gly) (interchain with G-Cter in SUMO2) cross-links involve residues Lys-363 and Lys-365. The segment at 381 to 423 (DDFSLNDALDSSNSMQTVQRTTTRKVVDGKVVSETNDTRVLRH) is tail. Phosphoserine is present on residues Ser-384, Ser-391, Ser-392, and Ser-394. The residue at position 397 (Thr-397) is a Phosphothreonine. Residue Lys-410 forms a Glycyl lysine isopeptide (Lys-Gly) (interchain with G-Cter in SUMO2) linkage.

This sequence belongs to the intermediate filament family. In terms of assembly, heterotetramer of two type I and two type II keratins. KRT18 associates with KRT8. Interacts with PNN and mutated CFTR. Interacts with YWHAE, YWHAH and YWHAZ only when phosphorylated. Interacts with DNAJB6, TCHP and TRADD. Interacts with the thrombin-antithrombin complex. Interacts with FAM83H. Interacts with EPPK1. Interacts with PKP1 and PKP2. Post-translationally, phosphorylation increases by IL-6. In terms of processing, proteolytically cleaved by caspases during epithelial cell apoptosis. Cleavage occurs at Asp-231 by either caspase-3, caspase-6 or caspase-7. Dephosphorylated by ethanol. Post-translationally, O-GlcNAcylation increases solubility, and decreases stability by inducing proteasomal degradation. In terms of tissue distribution, expressed on the plasma membrane of hepatocytes and in the narrow apical portions of supporting cells in the vomeronasal sensory epithelium. Detected in the type III alveolar cells of the lung, in the proliferative crypt epithelium of the small intestine and in the older intragemmal cells of the tongue.

The protein localises to the nucleus matrix. The protein resides in the cytoplasm. It localises to the perinuclear region. Its subcellular location is the nucleus. It is found in the nucleolus. In terms of biological role, when phosphorylated, plays a role in filament reorganization. Involved in the delivery of mutated CFTR to the plasma membrane. Together with KRT8, is involved in interleukin-6 (IL-6)-mediated barrier protection. Involved in the uptake of thrombin-antithrombin complexes by hepatic cells. The polypeptide is Keratin, type I cytoskeletal 18 (Rattus norvegicus (Rat)).